The following is a 953-amino-acid chain: Translation initiation factor IF-2 (953 aa).

The interval 55 to 340 (GVTTEAPAAS…KSKRQKRNEY (286 aa)) is disordered. The segment covering 81-93 (KPAATPQQAAKPA) has biased composition (low complexity). Residues 110–119 (PKPAAKPVPK) are compositionally biased toward pro residues. 2 stretches are compositionally biased toward low complexity: residues 123-133 (SAAKAESSAPK) and 143-160 (KPAA…MPRP). Positions 202-219 (PGGGPRPGGNRPQGGQGG) are enriched in gly residues. Low complexity predominate over residues 233–248 (QPRPQGGSRSQQSGGQ). The span at 280–323 (NGRGGAGGQGGRPGFGGGRPGGGGSAGGRGGRRGGTAGAFGRPG) shows a compositional bias: gly residues. Over residues 327–336 (RKGRKSKRQK) the composition is skewed to basic residues. One can recognise a tr-type G domain in the interval 449-621 (KRPPVVTVMG…VLLTADASLD (173 aa)). Positions 458–465 (GHVDHGKT) are G1. Residue 458–465 (GHVDHGKT) participates in GTP binding. Residues 483-487 (GITQG) are G2. The interval 508–511 (DTPG) is G3. Residues 508–512 (DTPGH) and 562–565 (NKID) contribute to the GTP site. The interval 562 to 565 (NKID) is G4. The G5 stretch occupies residues 598–600 (SAK).

It belongs to the TRAFAC class translation factor GTPase superfamily. Classic translation factor GTPase family. IF-2 subfamily.

It is found in the cytoplasm. In terms of biological role, one of the essential components for the initiation of protein synthesis. Protects formylmethionyl-tRNA from spontaneous hydrolysis and promotes its binding to the 30S ribosomal subunits. Also involved in the hydrolysis of GTP during the formation of the 70S ribosomal complex. This is Translation initiation factor IF-2 from Corynebacterium diphtheriae (strain ATCC 700971 / NCTC 13129 / Biotype gravis).